The primary structure comprises 1397 residues: Clustered mitochondria protein homolog (1397 aa).

One copy of the TPR 1 repeat lies at 30–63 (LPSFIDQKGDLKIPSHYEETITDLKLTLTVIPKT). 2 disordered regions span residues 158–203 (TARG…LSRE) and 526–555 (DAAPPSEEEDDAGAEQEKKEEGKAEEDEEE). Basic and acidic residues predominate over residues 161 to 203 (GEAEKSDTNEEEQEQGKGKVGKPNEKESGETKETDSQPELSRE). The region spanning 368–640 (DSSRSQLMLI…RTTPRDIEFI (273 aa)) is the Clu domain. The stretch at 559-595 (EKVLYGLSSDSQKILEDKSFEKPLKLLSEVFHLKPHG) is one TPR 2 repeat. Basic and acidic residues-rich tracts occupy residues 686–703 (EGKLEKDGSKGTNSEEKS), 812–831 (EKVEKDRREAEEAEKAKERA), 839–860 (SDDKNQETIENSDAKSKENTES), and 1019–1033 (QREQKQESVVDNVEK). 3 disordered regions span residues 686–707 (EGKLEKDGSKGTNSEEKSQIAL), 812–869 (EKVE…EEQP), and 1019–1050 (QREQKQESVVDNVEKKHSKKSKKKSPALPIEN). Over residues 1034–1043 (KHSKKSKKKS) the composition is skewed to basic residues. TPR repeat units lie at residues 1167 to 1200 (IAAYMNSAYFELANSQIANSLKLYLRAMQLWTST) and 1209 to 1242 (VNLLTNVADSLYYAKDYESALKLFNAALEACSHL). Polar residues-rich tracts occupy residues 1314–1338 (AQSKKSPPPTQTVAPNARVSASQAS) and 1362–1373 (PQSDPQIANQSV). Positions 1314–1397 (AQSKKSPPPT…AKSKSKHTKA (84 aa)) are disordered. Positions 1375-1384 (DILKFIEGKS) are enriched in basic and acidic residues. Residues 1386-1397 (PNAKSKSKHTKA) are compositionally biased toward basic residues.

This sequence belongs to the CLU family. In terms of assembly, may associate with the eukaryotic translation initiation factor 3 (eIF-3) complex.

The protein localises to the cytoplasm. Its function is as follows. mRNA-binding protein involved in proper cytoplasmic distribution of mitochondria. This chain is Clustered mitochondria protein homolog, found in Lodderomyces elongisporus (strain ATCC 11503 / CBS 2605 / JCM 1781 / NBRC 1676 / NRRL YB-4239) (Yeast).